The primary structure comprises 681 residues: Phosphomethylpyrimidine synthase (681 aa).

Residues 1-13 (MSNNTTSLPAENS) are compositionally biased toward polar residues. The segment at 1 to 29 (MSNNTTSLPAENSSHPRKGTPIRKKQREE) is disordered. Over residues 15-25 (HPRKGTPIRKK) the composition is skewed to basic residues. Substrate contacts are provided by residues Asn254, Met283, Tyr312, His348, 368–370 (SRG), 409–412 (DGLR), and Glu448. Residue His452 participates in Zn(2+) binding. Position 475 (Tyr475) interacts with substrate. Residue His516 participates in Zn(2+) binding. Residues Cys596, Cys599, and Cys604 each coordinate [4Fe-4S] cluster. Over residues 658-667 (FRSRGSELYH) the composition is skewed to basic and acidic residues. The tract at residues 658–681 (FRSRGSELYHRPANLSAEANNEPT) is disordered.

This sequence belongs to the ThiC family. In terms of assembly, homodimer. Requires [4Fe-4S] cluster as cofactor.

The catalysed reaction is 5-amino-1-(5-phospho-beta-D-ribosyl)imidazole + S-adenosyl-L-methionine = 4-amino-2-methyl-5-(phosphooxymethyl)pyrimidine + CO + 5'-deoxyadenosine + formate + L-methionine + 3 H(+). Its pathway is cofactor biosynthesis; thiamine diphosphate biosynthesis. Its function is as follows. Catalyzes the synthesis of the hydroxymethylpyrimidine phosphate (HMP-P) moiety of thiamine from aminoimidazole ribotide (AIR) in a radical S-adenosyl-L-methionine (SAM)-dependent reaction. This chain is Phosphomethylpyrimidine synthase, found in Yersinia pseudotuberculosis serotype I (strain IP32953).